The chain runs to 144 residues: C-type isolectin Sp-CL4 (144 aa).

The C-type lectin domain occupies 27-144; sequence DENRKVKYFE…CSEKLPFMCA (118 aa). Cystine bridges form between Cys-48-Cys-143 and Cys-119-Cys-135.

The protein belongs to the true venom lectin family. Glycosylated with a carbohydrate of 383 Da. Expressed by the venom gland.

The protein resides in the secreted. The role of this hemagglutinin in the venom is unknown, because it is masked by the high venom hemolytic activity. Lectin with specificity to galactose. Induces hemagglutination. This Scorpaena plumieri (Spotted scorpionfish) protein is C-type isolectin Sp-CL4.